The primary structure comprises 323 residues: Aquaporin NIP3-1 (323 aa).

At Met1 the chain carries N-acetylmethionine. Helical transmembrane passes span Leu45–Val65 and Val73–Ile93. The NPA 1 motif lies at Asn102–Ala104. The next 3 membrane-spanning stretches (helical) occupy residues Gly122–Phe142, Thr167–Ala187, and Phe196–Ser216. Positions Asn221–Ala223 match the NPA 2 motif. The chain crosses the membrane as a helical span at residues Trp239–Leu259.

It belongs to the MIP/aquaporin (TC 1.A.8) family. NIP (TC 1.A.8.12) subfamily.

The protein resides in the membrane. Its function is as follows. Aquaporins facilitate the transport of water and small neutral solutes across cell membranes. This chain is Aquaporin NIP3-1 (NIP3-1), found in Arabidopsis thaliana (Mouse-ear cress).